Reading from the N-terminus, the 1578-residue chain is Pentafunctional AROM polypeptide (1578 aa).

The interval 1–384 is 3-dehydroquinate synthase; the sequence is MTGPTKISIL…YEPRASVVPN (384 aa). NAD(+) contacts are provided by residues 44–46, 81–84, 114–116, and Asp-119; these read DTN, EVSK, and GGV. Arg-130 contacts 7-phospho-2-dehydro-3-deoxy-D-arabino-heptonate. 139 to 140 provides a ligand contact to NAD(+); that stretch reads TT. 7-phospho-2-dehydro-3-deoxy-D-arabino-heptonate contacts are provided by Asp-146 and Lys-152. Lys-161 lines the NAD(+) pocket. Asn-162 serves as a coordination point for 7-phospho-2-dehydro-3-deoxy-D-arabino-heptonate. NAD(+) contacts are provided by residues 179 to 182 and Asn-190; that span reads FLET. Glu-194 is a binding site for Zn(2+). 7-phospho-2-dehydro-3-deoxy-D-arabino-heptonate contacts are provided by residues 194–197 and Lys-250; that span reads EVIK. The Proton acceptor; for 3-dehydroquinate synthase activity role is filled by Glu-260. 7-phospho-2-dehydro-3-deoxy-D-arabino-heptonate contacts are provided by residues 264 to 268 and His-271; that span reads RNLLN. A Zn(2+)-binding site is contributed by His-271. His-275 acts as the Proton acceptor; for 3-dehydroquinate synthase activity in catalysis. The 7-phospho-2-dehydro-3-deoxy-D-arabino-heptonate site is built by His-287 and Lys-356. His-287 is a Zn(2+) binding site. The EPSP synthase stretch occupies residues 397–842; the sequence is VYPGVSPASE…WDTLRQKFAV (446 aa). Cys-824 serves as the catalytic For EPSP synthase activity. Residues 864 to 1055 form a shikimate kinase region; it reads SASVFIIGMR…KKKQHSFFVS (192 aa). 871-878 contacts ATP; it reads GMRGAGKT. Residues 1056-1276 form a 3-dehydroquinase region; the sequence is LTLPDVRGAD…AAPGQLSATD (221 aa). The Proton acceptor; for 3-dehydroquinate dehydratase activity role is filled by His-1179. The active-site Schiff-base intermediate with substrate; for 3-dehydroquinate dehydratase activity is the Lys-1207. The tract at residues 1289–1578 is shikimate dehydrogenase; sequence KKRFALFGSP…YERARAIVLG (290 aa).

This sequence in the N-terminal section; belongs to the sugar phosphate cyclases superfamily. Dehydroquinate synthase family. It in the 2nd section; belongs to the EPSP synthase family. The protein in the 3rd section; belongs to the shikimate kinase family. In the 4th section; belongs to the type-I 3-dehydroquinase family. This sequence in the C-terminal section; belongs to the shikimate dehydrogenase family. As to quaternary structure, homodimer. It depends on Zn(2+) as a cofactor.

It localises to the cytoplasm. The enzyme catalyses 7-phospho-2-dehydro-3-deoxy-D-arabino-heptonate = 3-dehydroquinate + phosphate. It catalyses the reaction 3-dehydroquinate = 3-dehydroshikimate + H2O. It carries out the reaction shikimate + NADP(+) = 3-dehydroshikimate + NADPH + H(+). The catalysed reaction is shikimate + ATP = 3-phosphoshikimate + ADP + H(+). The enzyme catalyses 3-phosphoshikimate + phosphoenolpyruvate = 5-O-(1-carboxyvinyl)-3-phosphoshikimate + phosphate. It functions in the pathway metabolic intermediate biosynthesis; chorismate biosynthesis; chorismate from D-erythrose 4-phosphate and phosphoenolpyruvate: step 2/7. It participates in metabolic intermediate biosynthesis; chorismate biosynthesis; chorismate from D-erythrose 4-phosphate and phosphoenolpyruvate: step 3/7. The protein operates within metabolic intermediate biosynthesis; chorismate biosynthesis; chorismate from D-erythrose 4-phosphate and phosphoenolpyruvate: step 4/7. Its pathway is metabolic intermediate biosynthesis; chorismate biosynthesis; chorismate from D-erythrose 4-phosphate and phosphoenolpyruvate: step 5/7. It functions in the pathway metabolic intermediate biosynthesis; chorismate biosynthesis; chorismate from D-erythrose 4-phosphate and phosphoenolpyruvate: step 6/7. Functionally, the AROM polypeptide catalyzes 5 consecutive enzymatic reactions in prechorismate polyaromatic amino acid biosynthesis. The sequence is that of Pentafunctional AROM polypeptide from Neosartorya fischeri (strain ATCC 1020 / DSM 3700 / CBS 544.65 / FGSC A1164 / JCM 1740 / NRRL 181 / WB 181) (Aspergillus fischerianus).